The following is a 339-amino-acid chain: Transmembrane protein 120B (339 aa).

The stretch at 1–67 forms a coiled coil; sequence MSGQLERCER…KHTLQRYKRH (67 aa). Transmembrane regions (helical) follow at residues 102–124, 132–152, 159–179, 187–207, 270–290, and 302–322; these read GLYL…AKFA, FKLY…FVLH, VFNF…SILI, GWWV…LTWP, FLLP…VTLF, and QVFV…LTTL.

Belongs to the TMEM120 family. In terms of assembly, heterooligomer with TMEM120A. Expressed in inguinal and subcutaneous white adipose tissue and in brown adipose tissue.

Its subcellular location is the nucleus inner membrane. Functionally, necessary for efficient adipogenesis. Does not show ion channel activity. The chain is Transmembrane protein 120B from Mus musculus (Mouse).